A 346-amino-acid chain; its full sequence is Heterogeneous nuclear ribonucleoprotein A2 homolog 1 (346 aa).

RRM domains lie at 9–92 (RKLF…ESAK) and 100–179 (KKLF…LSKQ). 2 disordered regions span residues 182–217 (QDVQ…FRGG) and 326–346 (NYGP…RNRY). Residues 193-217 (GNFGFGDSRGGGNFGSGPGGNFRGG) show a composition bias toward gly residues. The tract at residues 297–340 (QQSSNYGPMKSGGNFGGNRSMGGGPYGGGNYGPGNASGGNGGGY) is nuclear targeting sequence.

It is found in the nucleus. Its function is as follows. Forms complexes (ribonucleosomes) with at least 20 other different hnRNP and heterogeneous nuclear RNA in the nucleus. This chain is Heterogeneous nuclear ribonucleoprotein A2 homolog 1, found in Xenopus laevis (African clawed frog).